The primary structure comprises 271 residues: Formamidopyrimidine-DNA glycosylase (271 aa).

Proline 2 (schiff-base intermediate with DNA) is an active-site residue. The Proton donor role is filled by glutamate 3. Lysine 58 acts as the Proton donor; for beta-elimination activity in catalysis. DNA-binding residues include histidine 92, arginine 111, and lysine 152. The segment at tyrosine 237–asparagine 271 adopts an FPG-type zinc-finger fold. The active-site Proton donor; for delta-elimination activity is the arginine 261.

It belongs to the FPG family. In terms of assembly, monomer. Zn(2+) is required as a cofactor.

The catalysed reaction is Hydrolysis of DNA containing ring-opened 7-methylguanine residues, releasing 2,6-diamino-4-hydroxy-5-(N-methyl)formamidopyrimidine.. It catalyses the reaction 2'-deoxyribonucleotide-(2'-deoxyribose 5'-phosphate)-2'-deoxyribonucleotide-DNA = a 3'-end 2'-deoxyribonucleotide-(2,3-dehydro-2,3-deoxyribose 5'-phosphate)-DNA + a 5'-end 5'-phospho-2'-deoxyribonucleoside-DNA + H(+). Its function is as follows. Involved in base excision repair of DNA damaged by oxidation or by mutagenic agents. Acts as a DNA glycosylase that recognizes and removes damaged bases. Has a preference for oxidized purines, such as 7,8-dihydro-8-oxoguanine (8-oxoG). Has AP (apurinic/apyrimidinic) lyase activity and introduces nicks in the DNA strand. Cleaves the DNA backbone by beta-delta elimination to generate a single-strand break at the site of the removed base with both 3'- and 5'-phosphates. This chain is Formamidopyrimidine-DNA glycosylase, found in Wolbachia sp. subsp. Drosophila simulans (strain wRi).